We begin with the raw amino-acid sequence, 350 residues long: GTPase Obg (350 aa).

The 159-residue stretch at M1 to L159 folds into the Obg domain. The interval G17–G43 is disordered. Over residues G33–G43 the composition is skewed to gly residues. One can recognise an OBG-type G domain in the interval A160 to G334. Residues G166 to S173, F191 to A195, D213 to G216, N284 to D287, and S315 to L317 contribute to the GTP site. S173 and T193 together coordinate Mg(2+).

The protein belongs to the TRAFAC class OBG-HflX-like GTPase superfamily. OBG GTPase family. Monomer. Mg(2+) is required as a cofactor.

Its subcellular location is the cytoplasm. An essential GTPase which binds GTP, GDP and possibly (p)ppGpp with moderate affinity, with high nucleotide exchange rates and a fairly low GTP hydrolysis rate. Plays a role in control of the cell cycle, stress response, ribosome biogenesis and in those bacteria that undergo differentiation, in morphogenesis control. The protein is GTPase Obg of Thiobacillus denitrificans (strain ATCC 25259 / T1).